The chain runs to 943 residues: Translation initiation factor IF-2 (943 aa).

The interval 35–359 (MSSIDQDQEA…MPQRKERPLP (325 aa)) is disordered. Low complexity predominate over residues 57 to 76 (KAPSSQAAKTPAKAAKTSSA). Composition is skewed to basic and acidic residues over residues 92–103 (SNDHADAAEHSQ) and 110–124 (AKQE…KTSD). A compositionally biased stretch (polar residues) spans 130-141 (SKSTILRPRSTQ). The segment covering 142–190 (TAHTNTNHNRGGNTASANNTANGRNSNRSNNNNNNRSANNANRSGNNNR) has biased composition (low complexity). Composition is skewed to basic and acidic residues over residues 191–205 (SNER…RFDN), 239–250 (ASERQQPKRQEA), and 259–271 (KRSE…RPRT). Low complexity-rich tracts occupy residues 289 to 299 (PAAAAPKPASA) and 315 to 330 (NFGR…GFNR). The segment covering 331-342 (NNRRNKKNKRRQ) has biased composition (basic residues). A compositionally biased stretch (basic and acidic residues) spans 346–358 (PKKEMPQRKERPL). A tr-type G domain is found at 444–613 (PRPPVVTIMG…LLEADVLELK (170 aa)). The G1 stretch occupies residues 453–460 (GHVDHGKT). A GTP-binding site is contributed by 453–460 (GHVDHGKT). A G2 region spans residues 478–482 (GITQH). Residues 499 to 502 (DTPG) form a G3 region. GTP contacts are provided by residues 499–503 (DTPGH) and 553–556 (NKID). Residues 553–556 (NKID) form a G4 region. The segment at 589-591 (SAK) is G5.

This sequence belongs to the TRAFAC class translation factor GTPase superfamily. Classic translation factor GTPase family. IF-2 subfamily.

It is found in the cytoplasm. One of the essential components for the initiation of protein synthesis. Protects formylmethionyl-tRNA from spontaneous hydrolysis and promotes its binding to the 30S ribosomal subunits. Also involved in the hydrolysis of GTP during the formation of the 70S ribosomal complex. The chain is Translation initiation factor IF-2 from Lacticaseibacillus paracasei (strain ATCC 334 / BCRC 17002 / CCUG 31169 / CIP 107868 / KCTC 3260 / NRRL B-441) (Lactobacillus paracasei).